The primary structure comprises 219 residues: Small ribosomal subunit protein uS19 (219 aa).

A unknown region spans residues 1-128; that stretch reads MGFKGAWNKR…YEEIYAQYKQ (128 aa). Positions 129–219 are small ribosomal subunit protein uS19; the sequence is MTEKKAYVDP…DKTAKVVKKK (91 aa).

The protein belongs to the universal ribosomal protein uS19 family.

Protein S19 forms a complex with S13 that binds strongly to the 16S ribosomal RNA. This chain is Small ribosomal subunit protein uS19, found in Aquifex pyrophilus.